Consider the following 93-residue polypeptide: Phosphoribosyl-ATP pyrophosphatase (93 aa).

This sequence belongs to the PRA-PH family.

Its subcellular location is the cytoplasm. It catalyses the reaction 1-(5-phospho-beta-D-ribosyl)-ATP + H2O = 1-(5-phospho-beta-D-ribosyl)-5'-AMP + diphosphate + H(+). Its pathway is amino-acid biosynthesis; L-histidine biosynthesis; L-histidine from 5-phospho-alpha-D-ribose 1-diphosphate: step 2/9. This Metallosphaera sedula (strain ATCC 51363 / DSM 5348 / JCM 9185 / NBRC 15509 / TH2) protein is Phosphoribosyl-ATP pyrophosphatase.